We begin with the raw amino-acid sequence, 162 residues long: SsrA-binding protein (162 aa).

A disordered region spans residues glutamate 140–arginine 162.

The protein belongs to the SmpB family.

The protein resides in the cytoplasm. Functionally, required for rescue of stalled ribosomes mediated by trans-translation. Binds to transfer-messenger RNA (tmRNA), required for stable association of tmRNA with ribosomes. tmRNA and SmpB together mimic tRNA shape, replacing the anticodon stem-loop with SmpB. tmRNA is encoded by the ssrA gene; the 2 termini fold to resemble tRNA(Ala) and it encodes a 'tag peptide', a short internal open reading frame. During trans-translation Ala-aminoacylated tmRNA acts like a tRNA, entering the A-site of stalled ribosomes, displacing the stalled mRNA. The ribosome then switches to translate the ORF on the tmRNA; the nascent peptide is terminated with the 'tag peptide' encoded by the tmRNA and targeted for degradation. The ribosome is freed to recommence translation, which seems to be the essential function of trans-translation. This chain is SsrA-binding protein, found in Myxococcus xanthus (strain DK1622).